A 160-amino-acid polypeptide reads, in one-letter code: Cyclic pyranopterin monophosphate synthase (160 aa).

Substrate contacts are provided by residues 74 to 76 (LSH) and 112 to 113 (ME). Aspartate 127 is a catalytic residue.

It belongs to the MoaC family. Homohexamer; trimer of dimers.

The catalysed reaction is (8S)-3',8-cyclo-7,8-dihydroguanosine 5'-triphosphate = cyclic pyranopterin phosphate + diphosphate. The protein operates within cofactor biosynthesis; molybdopterin biosynthesis. In terms of biological role, catalyzes the conversion of (8S)-3',8-cyclo-7,8-dihydroguanosine 5'-triphosphate to cyclic pyranopterin monophosphate (cPMP). The sequence is that of Cyclic pyranopterin monophosphate synthase from Geobacter metallireducens (strain ATCC 53774 / DSM 7210 / GS-15).